A 258-amino-acid polypeptide reads, in one-letter code: Trifolitoxin-processing protein TfxF (258 aa).

Functionally, the actions of the proteins TfxB, TfxD and TfxF are implicated in the processing of the inactive trifolitoxin (TfxA) precursor into the active peptide. This chain is Trifolitoxin-processing protein TfxF (tfxF), found in Rhizobium leguminosarum bv. trifolii.